The chain runs to 355 residues: Homeotic protein knotted-1 (355 aa).

Positions 205 to 233 (KCEGVGSSEEDQDNSGGETELPEIDPRAE) are disordered. The ELK domain maps to 236 to 256 (ELKNHLLRKYSGYLSSLKQEL). Residues 257–320 (SKKKKKGKLP…NQRKRHWKPS (64 aa)) constitute a DNA-binding region (homeobox; TALE-type).

Belongs to the TALE/KNOX homeobox family. In terms of tissue distribution, expressed in the apical meristems, in the newly emerged lateral primordia in the floral bud, in their vascular bundles and in the cortex parenchyma of the floral pedicle. Also present in the lateral tips of leaf primordia.

The protein resides in the nucleus. Functionally, appears to be involved in meristem formation and in the regulation of leaf morphology. Misexpression makes the leaf more compound which is always associated with growth retardation and loss of apical dominance, resulting in dwarfed, bushy plants. Probably binds to the DNA sequence 5'-TGAC-3'. The sequence is that of Homeotic protein knotted-1 (KN1) from Solanum lycopersicum (Tomato).